A 133-amino-acid polypeptide reads, in one-letter code: Aspartate 1-decarboxylase (133 aa).

S26 acts as the Schiff-base intermediate with substrate; via pyruvic acid in catalysis. S26 carries the pyruvic acid (Ser) modification. T58 provides a ligand contact to substrate. Y59 acts as the Proton donor in catalysis. 74–76 contributes to the substrate binding site; that stretch reads GAA.

This sequence belongs to the PanD family. As to quaternary structure, heterooctamer of four alpha and four beta subunits. Requires pyruvate as cofactor. Post-translationally, is synthesized initially as an inactive proenzyme, which is activated by self-cleavage at a specific serine bond to produce a beta-subunit with a hydroxyl group at its C-terminus and an alpha-subunit with a pyruvoyl group at its N-terminus.

It is found in the cytoplasm. The enzyme catalyses L-aspartate + H(+) = beta-alanine + CO2. It functions in the pathway cofactor biosynthesis; (R)-pantothenate biosynthesis; beta-alanine from L-aspartate: step 1/1. Catalyzes the pyruvoyl-dependent decarboxylation of aspartate to produce beta-alanine. The sequence is that of Aspartate 1-decarboxylase from Legionella pneumophila (strain Paris).